Reading from the N-terminus, the 360-residue chain is Peptide chain release factor 1 (360 aa).

Position 237 is an N5-methylglutamine (Q237).

This sequence belongs to the prokaryotic/mitochondrial release factor family. Post-translationally, methylated by PrmC. Methylation increases the termination efficiency of RF1.

It is found in the cytoplasm. Its function is as follows. Peptide chain release factor 1 directs the termination of translation in response to the peptide chain termination codons UAG and UAA. The chain is Peptide chain release factor 1 from Nitrosococcus oceani (strain ATCC 19707 / BCRC 17464 / JCM 30415 / NCIMB 11848 / C-107).